The chain runs to 348 residues: MNPLAQLIIYTTVITGTLITMLSSHWFLAWAGLEMNMLAFIPTLIKKTNARSTEAATKYFLAQSTASMILMMAIISNNLLSGHWTTTTNYTNQFPPLAMTIALTMKLGMAPFHFWVPEVTQGTPLTSGLLLLTWQKLAPISIMYQIHPSINTHILLILSTLSIAVGSWGGLNQTQLRKILGYSSITHTGWMMMTLTYNPTITTLYLITYITLTTTMFLTLNLNSSTTTLTLSNTWNKSTHLMPLMTSTLLSLGGLPPLTGFLPKWVTIQELTMNNNFIIPTIMITMTLLNLYFYMRLIYTISLTLLPTSNNTKMTWQFENTKPTLFIPALITISTLLLPISPLILSIP.

A run of 9 helical transmembrane segments spans residues valine 13 to leucine 33, phenylalanine 60 to leucine 80, proline 96 to valine 116, proline 124 to tyrosine 144, isoleucine 150 to glycine 170, threonine 200 to leucine 220, leucine 241 to phenylalanine 261, isoleucine 278 to isoleucine 298, and leucine 325 to leucine 345.

Belongs to the complex I subunit 2 family. In terms of assembly, core subunit of respiratory chain NADH dehydrogenase (Complex I) which is composed of 45 different subunits. Interacts with TMEM242.

It localises to the mitochondrion inner membrane. It catalyses the reaction a ubiquinone + NADH + 5 H(+)(in) = a ubiquinol + NAD(+) + 4 H(+)(out). Functionally, core subunit of the mitochondrial membrane respiratory chain NADH dehydrogenase (Complex I) which catalyzes electron transfer from NADH through the respiratory chain, using ubiquinone as an electron acceptor. Essential for the catalytic activity and assembly of complex I. The sequence is that of NADH-ubiquinone oxidoreductase chain 2 from Papio hamadryas (Hamadryas baboon).